Consider the following 106-residue polypeptide: MSLASRRKVRIRLYGTNPADLDQVAREIVDLAKKMGVAVRGPIPLPTKRLMVTVRRAPSGQGYHTFDHWELRISKRLIDIEASERVLRRLMTIRVPDTVKIELQLI.

It belongs to the universal ribosomal protein uS10 family. In terms of assembly, part of the 30S ribosomal subunit.

In terms of biological role, involved in the binding of tRNA to the ribosomes. The sequence is that of Small ribosomal subunit protein uS10 from Pyrobaculum calidifontis (strain DSM 21063 / JCM 11548 / VA1).